Here is a 277-residue protein sequence, read N- to C-terminus: Co-chaperone protein DjlA (277 aa).

Residues 1–6 (MRYWGK) lie on the Periplasmic side of the membrane. The helical transmembrane segment at 7–31 (LLGLVLGVMYAPGVVGALLGLLVGH) threads the bilayer. Over 32 to 277 (MVDRALGAKR…DLIKREKGFK (246 aa)) the chain is Cytoplasmic. Residues 211–277 (DACKVLGVNS…DLIKREKGFK (67 aa)) form the J domain.

As to quaternary structure, homodimer.

Its subcellular location is the cell inner membrane. Regulatory DnaK co-chaperone. Direct interaction between DnaK and DjlA is needed for the induction of the wcaABCDE operon, involved in the synthesis of a colanic acid polysaccharide capsule, possibly through activation of the RcsB/RcsC phosphotransfer signaling pathway. The colanic acid capsule may help the bacterium survive conditions outside the host. The protein is Co-chaperone protein DjlA of Yersinia pestis.